A 380-amino-acid polypeptide reads, in one-letter code: Chaperone protein DnaJ (380 aa).

The J domain maps to 5–69; sequence DYYEILGVSK…QKRAHYDQFG (65 aa). Residues 135–217 form a CR-type zinc finger; that stretch reads GKETDIEIPR…CGGTGRVKKR (83 aa). C148, C151, C165, C168, C191, C194, C205, and C208 together coordinate Zn(2+). CXXCXGXG motif repeat units lie at residues 148 to 155, 165 to 172, 191 to 198, and 205 to 212; these read CDTCHGTG, CSYCHGTG, CPYCGGTG, and CTTCGGTG.

The protein belongs to the DnaJ family. Homodimer. Zn(2+) is required as a cofactor.

The protein localises to the cytoplasm. Its function is as follows. Participates actively in the response to hyperosmotic and heat shock by preventing the aggregation of stress-denatured proteins and by disaggregating proteins, also in an autonomous, DnaK-independent fashion. Unfolded proteins bind initially to DnaJ; upon interaction with the DnaJ-bound protein, DnaK hydrolyzes its bound ATP, resulting in the formation of a stable complex. GrpE releases ADP from DnaK; ATP binding to DnaK triggers the release of the substrate protein, thus completing the reaction cycle. Several rounds of ATP-dependent interactions between DnaJ, DnaK and GrpE are required for fully efficient folding. Also involved, together with DnaK and GrpE, in the DNA replication of plasmids through activation of initiation proteins. The sequence is that of Chaperone protein DnaJ from Geobacillus sp. (strain WCH70).